A 403-amino-acid chain; its full sequence is S-adenosylmethionine:tRNA ribosyltransferase-isomerase (403 aa).

It belongs to the QueA family. As to quaternary structure, monomer.

It localises to the cytoplasm. The enzyme catalyses 7-aminomethyl-7-carbaguanosine(34) in tRNA + S-adenosyl-L-methionine = epoxyqueuosine(34) in tRNA + adenine + L-methionine + 2 H(+). It participates in tRNA modification; tRNA-queuosine biosynthesis. Its function is as follows. Transfers and isomerizes the ribose moiety from AdoMet to the 7-aminomethyl group of 7-deazaguanine (preQ1-tRNA) to give epoxyqueuosine (oQ-tRNA). The protein is S-adenosylmethionine:tRNA ribosyltransferase-isomerase of Psychrobacter arcticus (strain DSM 17307 / VKM B-2377 / 273-4).